The chain runs to 106 residues: MTYIIFAFAALFEIAGCFAFWAWLKLENPVWWLAPGMVSLALFAWILTLVPSEAAGRTFAAYGGIYILASLLWLWLVESRVPDRYDIGGALICLAGASLILFAPRG.

A run of 4 helical transmembrane segments spans residues 4–24 (IIFA…WAWL), 30–50 (VWWL…LTLV), 58–78 (TFAA…WLVE), and 86–106 (DIGG…APRG).

The protein belongs to the UPF0060 family.

Its subcellular location is the cell inner membrane. In Rhizobium johnstonii (strain DSM 114642 / LMG 32736 / 3841) (Rhizobium leguminosarum bv. viciae), this protein is UPF0060 membrane protein RL1530.